A 233-amino-acid chain; its full sequence is Small ribosomal subunit protein uS7m (233 aa).

The transit peptide at 1–28 directs the protein to the mitochondrion; the sequence is MAAPTAAGLCPRLRAWLPRLTQVRWSRY.

The protein belongs to the universal ribosomal protein uS7 family. Component of the mitochondrial ribosome small subunit (28S) which comprises a 12S rRNA and about 30 distinct proteins.

The protein resides in the mitochondrion. The protein is Small ribosomal subunit protein uS7m (MRPS7) of Gallus gallus (Chicken).